Here is a 726-residue protein sequence, read N- to C-terminus: MKKKNLITAALPYVNNIPHLGNLVQVLSADAFARYSRMMDIDTLYVCGTDEYGTATETKALIEKTTPEELCNRYYAIHKSIYEWFNIKFDIFGRTTNKSHKQTVQDLFLKLEKNGYITDKESEQFFCQQDQMFLADRYVTGECPNCGNNAKGDQCENCSKLLAPIDLINPKCIICKNIPIIKTTKHLYINLPKIKNELIHWMQTTEHNTNWNTNAIKTTNAFLRDGLKERAITRDLKWGIPVPKKEYENKVFYVWFDAPIGYISITKEISKDWESWWKNNKETNLVQFIGKDNILFHTVIFPAIKLGSKENWTMLGKLASSEYLNYEHLKFSKSAGIGIFGNDVITTGISADIWRFYIYYNRPEKSDFQFMWDDFMERINSELIGNFSNLVNRVLTFYKKFFGDKIDTIEIKEDFWKEINLKYDKTLNFFKQIELKSALKEILDISRIGNKIFQDKEPWKTKDSTPKKTKELLLNLIYLIRDLSILISPFIPHTSDKIRRFFGESYEISNKFLGTNLGLNTIQFTEVLFTKLEKELIDSLKLKYSGGKNMQDEQTENPINLFSEKVCLKVVQIKTIERNPDAEKLFILKLDDGTPDGKQIVSSLADYYKEEKLIGKHIIIVDNLKPAKFRGIKSEGMLIATEDENKNFKVIIVEDFKDNPIPGERIILESDSDKKLKLPSKISIDKFLKTQIVAENGELKVNGINLILEHSKEKILSREIPNGKVY.

The 'HIGH' region signature appears at 12–22 (PYVNNIPHLGN). Positions 143, 146, 155, and 158 each coordinate Zn(2+). Positions 330 to 334 (KFSKS) match the 'KMSKS' region motif. An ATP-binding site is contributed by K333. One can recognise a tRNA-binding domain in the interval 562-667 (FSEKVCLKVV…DNPIPGERII (106 aa)).

The protein belongs to the class-I aminoacyl-tRNA synthetase family. MetG type 1 subfamily. Homodimer. Zn(2+) serves as cofactor.

It localises to the cytoplasm. The catalysed reaction is tRNA(Met) + L-methionine + ATP = L-methionyl-tRNA(Met) + AMP + diphosphate. Is required not only for elongation of protein synthesis but also for the initiation of all mRNA translation through initiator tRNA(fMet) aminoacylation. This Borrelia turicatae (strain 91E135) protein is Methionine--tRNA ligase.